Here is a 787-residue protein sequence, read N- to C-terminus: Endonuclease MutS2 (787 aa).

ATP is bound at residue 334–341 (GPNTGGKT). Residues 685 to 709 (KAQDPAKSAKQPRASVKRSGSSGMS) form a disordered region. Positions 712–787 (LDLRGHRYEE…GDGSTVVHFK (76 aa)) constitute a Smr domain.

It belongs to the DNA mismatch repair MutS family. MutS2 subfamily. Homodimer. Binds to stalled ribosomes, contacting rRNA.

Endonuclease that is involved in the suppression of homologous recombination and thus may have a key role in the control of bacterial genetic diversity. In terms of biological role, acts as a ribosome collision sensor, splitting the ribosome into its 2 subunits. Detects stalled/collided 70S ribosomes which it binds and splits by an ATP-hydrolysis driven conformational change. Acts upstream of the ribosome quality control system (RQC), a ribosome-associated complex that mediates the extraction of incompletely synthesized nascent chains from stalled ribosomes and their subsequent degradation. Probably generates substrates for RQC. The chain is Endonuclease MutS2 from Levilactobacillus brevis (strain ATCC 367 / BCRC 12310 / CIP 105137 / JCM 1170 / LMG 11437 / NCIMB 947 / NCTC 947) (Lactobacillus brevis).